The chain runs to 205 residues: Protein N-terminal glutamine amidohydrolase (205 aa).

Catalysis depends on residues cysteine 20, histidine 74, and aspartate 90.

It belongs to the NTAQ1 family. Monomer.

It catalyses the reaction N-terminal L-glutaminyl-[protein] + H2O = N-terminal L-glutamyl-[protein] + NH4(+). Functionally, mediates the side-chain deamidation of N-terminal glutamine residues to glutamate, an important step in N-end rule pathway of protein degradation. Conversion of the resulting N-terminal glutamine to glutamate renders the protein susceptible to arginylation, polyubiquitination and degradation as specified by the N-end rule. Does not act on substrates with internal or C-terminal glutamine and does not act on non-glutamine residues in any position. This chain is Protein N-terminal glutamine amidohydrolase (tun), found in Drosophila virilis (Fruit fly).